Consider the following 1297-residue polypeptide: DNA-directed RNA polymerase subunit beta' (1297 aa).

Positions 60, 62, 75, and 78 each coordinate Zn(2+). 3 residues coordinate Mg(2+): Asp535, Asp537, and Asp539. Zn(2+) is bound by residues Cys883, Cys961, Cys968, and Cys971.

It belongs to the RNA polymerase beta' chain family. As to quaternary structure, the RNAP catalytic core consists of 2 alpha, 1 beta, 1 beta' and 1 omega subunit. When a sigma factor is associated with the core the holoenzyme is formed, which can initiate transcription. Requires Mg(2+) as cofactor. The cofactor is Zn(2+).

The enzyme catalyses RNA(n) + a ribonucleoside 5'-triphosphate = RNA(n+1) + diphosphate. DNA-dependent RNA polymerase catalyzes the transcription of DNA into RNA using the four ribonucleoside triphosphates as substrates. The polypeptide is DNA-directed RNA polymerase subunit beta' (Salinispora tropica (strain ATCC BAA-916 / DSM 44818 / JCM 13857 / NBRC 105044 / CNB-440)).